A 61-amino-acid chain; its full sequence is Small ribosomal subunit protein uS14 (61 aa).

Zn(2+) contacts are provided by C24, C27, C40, and C43.

Belongs to the universal ribosomal protein uS14 family. Zinc-binding uS14 subfamily. As to quaternary structure, part of the 30S ribosomal subunit. Contacts proteins S3 and S10. Zn(2+) is required as a cofactor.

Its function is as follows. Binds 16S rRNA, required for the assembly of 30S particles and may also be responsible for determining the conformation of the 16S rRNA at the A site. This chain is Small ribosomal subunit protein uS14, found in Carboxydothermus hydrogenoformans (strain ATCC BAA-161 / DSM 6008 / Z-2901).